The chain runs to 670 residues: Probable Rho-GTPase-activating protein 9 (670 aa).

The F-BAR domain occupies 3–392 (DGFSNSFWSR…SFKNLDSLRD (390 aa)). Residues 141–161 (NSKKSNLTDRKPIPTSRKSNK) are disordered. The Rho-GAP domain maps to 425-622 (SSLTEDNLIV…DLINEFENLF (198 aa)). The residue at position 640 (Thr-640) is a Phosphothreonine. A compositionally biased stretch (polar residues) spans 641 to 663 (PITTSPQKLKLPRSSSPCKNPSP). The tract at residues 641–670 (PITTSPQKLKLPRSSSPCKNPSPTRRFRPF) is disordered. At Ser-645 the chain carries Phosphoserine.

It localises to the cytoplasm. This is Probable Rho-GTPase-activating protein 9 (rga9) from Schizosaccharomyces pombe (strain 972 / ATCC 24843) (Fission yeast).